A 301-amino-acid polypeptide reads, in one-letter code: Sulfate adenylyltransferase subunit 2 (301 aa).

It belongs to the PAPS reductase family. CysD subfamily. As to quaternary structure, heterodimer composed of CysD, the smaller subunit, and CysN.

It catalyses the reaction sulfate + ATP + H(+) = adenosine 5'-phosphosulfate + diphosphate. The protein operates within sulfur metabolism; hydrogen sulfide biosynthesis; sulfite from sulfate: step 1/3. In terms of biological role, with CysN forms the ATP sulfurylase (ATPS) that catalyzes the adenylation of sulfate producing adenosine 5'-phosphosulfate (APS) and diphosphate, the first enzymatic step in sulfur assimilation pathway. APS synthesis involves the formation of a high-energy phosphoric-sulfuric acid anhydride bond driven by GTP hydrolysis by CysN coupled to ATP hydrolysis by CysD. The polypeptide is Sulfate adenylyltransferase subunit 2 (Geobacter metallireducens (strain ATCC 53774 / DSM 7210 / GS-15)).